Here is a 132-residue protein sequence, read N- to C-terminus: MAVAKVQYFGTGRRKTSVARVRLVPGNGKIVVNNKAMDDYFGLETLKAIIKQPLQTVEMEDKFDVLVNVRGGGHSGQAEAIRHGIARALVKADGELRPVLKKEGYLTRDPRMKERKKYGLRKARRAPQFSKR.

Residues 104-132 are disordered; the sequence is GYLTRDPRMKERKKYGLRKARRAPQFSKR. The segment covering 113–132 has biased composition (basic residues); that stretch reads KERKKYGLRKARRAPQFSKR.

The protein belongs to the universal ribosomal protein uS9 family.

The polypeptide is Small ribosomal subunit protein uS9 (Natranaerobius thermophilus (strain ATCC BAA-1301 / DSM 18059 / JW/NM-WN-LF)).